The primary structure comprises 388 residues: MMLSLPAKFEVFGAVRIYDVSRVLSLDGRPKSRPTNLVYVDRGELEDAAFRTVIVVPVKDEDLLTLENVLRSIPTESPVVVVSASTREPVDRFSNEVELARLISRSLQRDIAIVYQFDPAWSEALSGTPLESMVGASGRVRKGKGEGMLLGFIVAAALGADFVGYVDSDNYVPGSALEYSWIYYSALSRATSSYSMVRIVWPYKGKLAASDMYLRKRGRVSTITNGVLNYTLSIYKRIETDIIKTGNSGEQALTVKLGMEMNWGSGFAVETYQLVWMLENCYLGLQAGKCPIAPDYIEVRQVSPLNPHIHAERGDEHIAEMTAVSLGTIFHSSLASEEVKSRILDQLKSLGLAEEPPKPSTYRPAGTDPKKVFASFIAESSDSYYFAV.

The protein belongs to the glycosyltransferase 2 family.

The protein resides in the cytoplasm. It catalyses the reaction (2R)-3-phosphoglycerate + GDP-alpha-D-mannose = 2-O-(alpha-D-mannosyl)-3-phosphoglycerate + GDP + H(+). It functions in the pathway carbohydrate biosynthesis; 2-(alpha-D-mannosyl)-D-glycerate biosynthesis; 2-(alpha-D-mannosyl)-D-glycerate from GDP-alpha-D-mannose (MPG route): step 1/2. Transfers a mannosyl group from GDP-mannose to phosphoglycerate to form mannosyl-3-phosphoglycerate (MPG). The protein is Mannosyl-3-phosphoglycerate synthase (mngA) of Aeropyrum pernix (strain ATCC 700893 / DSM 11879 / JCM 9820 / NBRC 100138 / K1).